A 528-amino-acid chain; its full sequence is Phosphoenolpyruvate carboxykinase (ATP) (528 aa).

Substrate contacts are provided by R56, Y192, and K198. ATP contacts are provided by residues K198, H217, and 233-241 (GLSGTGKTT). Positions 198 and 217 each coordinate Mn(2+). D254 is a Mn(2+) binding site. Residues E282, R319, and T444 each contribute to the ATP site. R319 is a binding site for substrate.

Belongs to the phosphoenolpyruvate carboxykinase (ATP) family. Requires Mn(2+) as cofactor.

Its subcellular location is the cytoplasm. It carries out the reaction oxaloacetate + ATP = phosphoenolpyruvate + ADP + CO2. The protein operates within carbohydrate biosynthesis; gluconeogenesis. Its function is as follows. Involved in the gluconeogenesis. Catalyzes the conversion of oxaloacetate (OAA) to phosphoenolpyruvate (PEP) through direct phosphoryl transfer between the nucleoside triphosphate and OAA. The protein is Phosphoenolpyruvate carboxykinase (ATP) of Bacillus cereus (strain G9842).